The following is a 519-amino-acid chain: Cytochrome P450 52-E3 (519 aa).

Residues 10-30 (VLGGISVSFLLAYQAIYFYFI) form a helical membrane-spanning segment. Cysteine 461 contributes to the heme binding site.

This sequence belongs to the cytochrome P450 family. Heme serves as cofactor.

The protein localises to the membrane. The catalysed reaction is an omega-methyl-long-chain fatty acid + reduced [NADPH--hemoprotein reductase] + O2 = an omega-hydroxy-long-chain fatty acid + oxidized [NADPH--hemoprotein reductase] + H2O + H(+). The enzyme catalyses (9Z)-octadecenoate + reduced [NADPH--hemoprotein reductase] + O2 = 18-hydroxy-(9Z)-octadecenoate + oxidized [NADPH--hemoprotein reductase] + H2O + H(+). It catalyses the reaction hexadecanoate + reduced [NADPH--hemoprotein reductase] + O2 = 16-hydroxyhexadecanoate + oxidized [NADPH--hemoprotein reductase] + H2O + H(+). It carries out the reaction (9Z)-hexadecenoate + reduced [NADPH--hemoprotein reductase] + O2 = (9Z)-16-hydroxyhexadec-9-enoate + oxidized [NADPH--hemoprotein reductase] + H2O + H(+). Catalyzes the terminal (at the omega-position) hydroxylation of a fatty acid. Probably involved in alkane metabolism. Has minor activity toward myristic acid, palmitic acid, palmitoleic acid and oleic acid. This is Cytochrome P450 52-E3 from Starmerella bombicola (Yeast).